Here is a 113-residue protein sequence, read N- to C-terminus: Large ribosomal subunit protein eL36z (113 aa).

Residues 78-88 (RKLGTHKRAKR) show a composition bias toward basic residues. The disordered stretch occupies residues 78–113 (RKLGTHKRAKRKREEMSSVLRKMRSLGGAAAAEKKM).

This sequence belongs to the eukaryotic ribosomal protein eL36 family.

The polypeptide is Large ribosomal subunit protein eL36z (RPL36A) (Arabidopsis thaliana (Mouse-ear cress)).